The primary structure comprises 391 residues: Multidrug resistance protein MdtL (391 aa).

The next 12 helical transmembrane spans lie at Phe4 to Val24, Ile42 to Ala62, Pro69 to Glu89, Leu93 to Phe113, Leu131 to Met151, Ser158 to Leu178, Phe203 to Val222, Ala245 to Phe265, Thr269 to Pro289, Ile293 to Met313, Ala324 to Ala346, and Ala363 to Ala383.

This sequence belongs to the major facilitator superfamily. DHA1 family. MdtL (TC 2.A.1.2.22) subfamily.

The protein resides in the cell inner membrane. In terms of biological role, confers resistance to chloramphenicol. In Escherichia fergusonii (strain ATCC 35469 / DSM 13698 / CCUG 18766 / IAM 14443 / JCM 21226 / LMG 7866 / NBRC 102419 / NCTC 12128 / CDC 0568-73), this protein is Multidrug resistance protein MdtL.